The sequence spans 508 residues: MSQSSIAIQIEALLTYALQHGLITKWDIDASRNRVLDVLDLDELEPVEQVDVECEMPYPILENILDWAAENGRLEANTVTYRDLLDTKLMGALLGQPSETIRTFYERYEQQGPEEATKVFYDFSKQVHYIRTDRIAKNEHWFSETPYGQLEITINLSKPEKDPKAIAQAKHLQASSYPKCLLCKENVGYRGRVNHPARQNLRVIPVELNQEQWYMQFSPYVYYNEHAIVFSGEHVPMKISTETFARLLEFTEKFPHYFIGSNADLPIVGGSILSHDHFQGGNHAFPMAKASMEKTFSISRFPSVIAGIVKWPMSVVRLQGMDRSELVKAADHVYHAWQAYGDEAADIYPFTGDTPHNTITPIARRRGELFELDLVLRNNRTSKEHPDGIFHPHQEVHHIKKENIGLIEVMGLAVLPGRLKEELELLAEALLSSDPRQVIARYEQIQKHEAWALAIKERHAHLHDSNVMDILRDEIGKVFATILAHAGVFKRTGEGAAAFDRFISTLNQ.

It belongs to the galactose-1-phosphate uridylyltransferase type 2 family.

It localises to the cytoplasm. It catalyses the reaction alpha-D-galactose 1-phosphate + UDP-alpha-D-glucose = alpha-D-glucose 1-phosphate + UDP-alpha-D-galactose. Its pathway is carbohydrate metabolism; galactose metabolism. This is Galactose-1-phosphate uridylyltransferase (galT) from Halalkalibacterium halodurans (strain ATCC BAA-125 / DSM 18197 / FERM 7344 / JCM 9153 / C-125) (Bacillus halodurans).